The primary structure comprises 364 residues: DNA-(apurinic or apyrimidinic site) endonuclease (364 aa).

2 stretches are compositionally biased toward basic and acidic residues: residues 1-12 (MKRFFKPIEKEN) and 23-39 (PEKR…EKNQ). Residues 1–42 (MKRFFKPIEKENSPAAKKPCLSPEKRDGDGDGVEEEKNQNEP) are disordered. Residue Glu80 coordinates Mg(2+). Residue Tyr182 is part of the active site. Residues Asp222, Asn224, and Asp342 each coordinate Mg(2+). Asp222 (proton donor/acceptor) is an active-site residue.

Belongs to the DNA repair enzymes AP/exoA family. Interacts with ROS1. ROS1 is required for APE1L to stably associate with the DNA substrate. It depends on Mg(2+) as a cofactor. As to expression, expressed in leaves, flower buds and developing siliques. Not detected in roots.

Its subcellular location is the nucleus. The protein localises to the nucleolus. Its function is as follows. Apurinic/apyrimidinic (AP) endonuclease involved in active DNA demethylation and gene imprinting. According to a report, also displays an in vitro 3'-phosphatase activity. According to another report, has no in vitro 3'-phosphatase activity. Catalyzes the conversion of the 3'-blocking groups 3'-phosphor-alpha,beta-unsaturated aldehyde (3'-PUA) generated by ROS1 to 3'-OH. Has a strong non-specific affinity to DNA. Redundant with APE2 and at least one functional allele is required for seed viability. This Arabidopsis thaliana (Mouse-ear cress) protein is DNA-(apurinic or apyrimidinic site) endonuclease.